The primary structure comprises 348 residues: GTP 3',8-cyclase (348 aa).

Positions 24-248 (PFGRAVTYLR…TDIDYQTGGP (225 aa)) constitute a Radical SAM core domain. Position 33 (Arg-33) interacts with GTP. [4Fe-4S] cluster-binding residues include Cys-40 and Cys-44. Tyr-46 contacts S-adenosyl-L-methionine. Cys-47 lines the [4Fe-4S] cluster pocket. Position 82 (Arg-82) interacts with GTP. Gly-86 contributes to the S-adenosyl-L-methionine binding site. Thr-115 is a binding site for GTP. Ser-139 lines the S-adenosyl-L-methionine pocket. Lys-175 lines the GTP pocket. Met-209 lines the S-adenosyl-L-methionine pocket. 2 residues coordinate [4Fe-4S] cluster: Cys-272 and Cys-275. A GTP-binding site is contributed by 277 to 279 (RVR). Cys-289 lines the [4Fe-4S] cluster pocket.

The protein belongs to the radical SAM superfamily. MoaA family. Monomer and homodimer. Requires [4Fe-4S] cluster as cofactor.

The catalysed reaction is GTP + AH2 + S-adenosyl-L-methionine = (8S)-3',8-cyclo-7,8-dihydroguanosine 5'-triphosphate + 5'-deoxyadenosine + L-methionine + A + H(+). It participates in cofactor biosynthesis; molybdopterin biosynthesis. Its function is as follows. Catalyzes the cyclization of GTP to (8S)-3',8-cyclo-7,8-dihydroguanosine 5'-triphosphate. This is GTP 3',8-cyclase from Rhizobium etli (strain ATCC 51251 / DSM 11541 / JCM 21823 / NBRC 15573 / CFN 42).